We begin with the raw amino-acid sequence, 473 residues long: Trehalose-6-phosphate synthase (473 aa).

R10 contacts D-glucose 6-phosphate. Residue 21-22 (GG) participates in UDP-alpha-D-glucose binding. D-glucose 6-phosphate is bound by residues Y76 and D130. The UDP-alpha-D-glucose site is built by R262 and K267. Residue R300 participates in D-glucose 6-phosphate binding. UDP-alpha-D-glucose contacts are provided by residues F339 and 365–369 (LVAKE).

It belongs to the glycosyltransferase 20 family. Homotetramer.

It catalyses the reaction D-glucose 6-phosphate + UDP-alpha-D-glucose = alpha,alpha-trehalose 6-phosphate + UDP + H(+). It functions in the pathway glycan biosynthesis; trehalose biosynthesis. In terms of biological role, probably involved in the osmoprotection via the biosynthesis of trehalose. Catalyzes the transfer of glucose from UDP-alpha-D-glucose (UDP-Glc) to D-glucose 6-phosphate (Glc-6-P) to form trehalose-6-phosphate. Acts with retention of the anomeric configuration of the UDP-sugar donor. The protein is Trehalose-6-phosphate synthase of Citrobacter koseri (strain ATCC BAA-895 / CDC 4225-83 / SGSC4696).